A 465-amino-acid polypeptide reads, in one-letter code: E3 ubiquitin-protein ligase parkin (465 aa).

The Ubiquitin-like domain maps to 1–76 (MIVFVRFNSS…VHIVQRPWRK (76 aa)). Serine 65 is subject to Phosphoserine; by PINK1. The segment at 77-99 (GQEMNATGGDDPRNAAGGCEREP) is disordered. The segment at 77 to 237 (GQEMNATGGD…LIATNSRNIT (161 aa)) is necessary for PINK1-dependent localization to mitochondria. The RING-type 0; atypical zinc finger occupies 141–225 (SIYNSFYVYC…PTSDKETSVA (85 aa)). At threonine 175 the chain carries Phosphothreonine; by PINK1. The tract at residues 204 to 238 (TSAEFFFKCGAHPTSDKETSVALHLIATNSRNITC) is SYT11 binding 1. Threonine 217 carries the post-translational modification Phosphothreonine. The segment at 234 to 465 (RNITCITCTD…VCMGDHWFDV (232 aa)) is TRIAD supradomain. Cysteine 238, cysteine 241, cysteine 253, histidine 257, cysteine 260, cysteine 263, cysteine 289, cysteine 293, cysteine 332, and cysteine 337 together coordinate Zn(2+). The RING-type 1 zinc-finger motif lies at 238-293 (CITCTDVRSPVLVFQCNSRHVICLDCFHLYCVTRLNDRQFVHDPQLGYSLPCVAGC). Residues 257–293 (HVICLDCFHLYCVTRLNDRQFVHDPQLGYSLPCVAGC) are SYT11 binding 2. The IBR-type zinc-finger motif lies at 313-377 (NRYQQYGAEE…CKEAYHEGEC (65 aa)). Lysine 349 is covalently cross-linked (Glycyl lysine isopeptide (Lys-Gly) (interchain with G-Cter in ISG15)). Zn(2+)-binding residues include cysteine 352, cysteine 360, cysteine 365, and cysteine 368. Residue lysine 369 forms a Glycyl lysine isopeptide (Lys-Gly) (interchain with G-Cter in ISG15) linkage. Histidine 373 and cysteine 377 together coordinate Zn(2+). The segment at 378–410 (SAVFEASGTTTQAYRVDERAAEQARWEAASKET) is REP. Zn(2+)-binding residues include cysteine 418 and cysteine 421. The RING-type 2; atypical zinc finger occupies 418 to 449 (CPRCHVPVEKNGGCMHMKCPQPQCRLEWCWNC). Cysteine 431 is a catalytic residue. The Zn(2+) site is built by cysteine 436, cysteine 441, cysteine 446, cysteine 449, cysteine 457, and histidine 461.

It belongs to the RBR family. Parkin subfamily. Forms an E3 ubiquitin ligase complex with UBE2L3 or UBE2L6. Mediates 'Lys-63'-linked polyubiquitination by associating with UBE2V1. Part of a SCF-like complex, consisting of PRKN, CUL1 and FBXW7. Interacts with SNCAIP. Binds to the C2A and C2B domains of SYT11. Interacts and regulates the turnover of SEPTIN5. Part of a complex, including STUB1, HSP70 and GPR37. The amount of STUB1 in the complex increases during ER stress. STUB1 promotes the dissociation of HSP70 from PRKN and GPR37, thus facilitating PRKN-mediated GPR37 ubiquitination. HSP70 transiently associates with unfolded GPR37 and inhibits the E3 activity of PRKN, whereas, STUB1 enhances the E3 activity of PRKN through promotion of dissociation of HSP70 from PRKN-GPR37 complexes. Interacts with PSMD4 and PACRG. Interacts with LRRK2. Interacts with RANBP2. Interacts with SUMO1 but not SUMO2, which promotes nuclear localization and autoubiquitination. Interacts (via first RING-type domain) with AIMP2 (via N-terminus). Interacts with PSMA7 and RNF41. Interacts with PINK1. Forms a complex with PINK1 and PARK7. Interacts with CHPF, the interaction with isoform 2 may facilitate PRKN transport into the mitochondria. Interacts with MFN2 (phosphorylated), promotes PRKN localization in dysfunctional depolarized mitochondria. Interacts with FBXO7; this promotes translocation to dysfunctional depolarized mitochondria. Interacts with ZNF746. Interacts with heat shock protein 70 family members, including HSPA1L, HSPA1A and HSPA8; interaction HSPA1L promotes translocation to damaged mitochondria. Interacts with BAG4 and, to a lesser extent, BAG5; interaction with BAG4 inhibits translocation to damaged mitochondria. Forms a complex with PRKN and PARK7. Interacts with AMBRA1. Post-translationally, ISGylated. Conjugated to ubiquitin-like protein ISG15 upon IFN-beta stimulation. ISGylation positively regulates its E3 ligase activity. In terms of processing, auto-ubiquitinates in an E2-dependent manner leading to its own degradation. Also polyubiquitinated by RNF41 for proteasomal degradation. S-nitrosylated. The inhibition of PRKN ubiquitin E3 ligase activity by S-nitrosylation could contribute to the degenerative process in PD by impairing the ubiquitination of PRKN substrates. Post-translationally, phosphorylated. Activation requires phosphorylation at Ser-65 by PINK1 and binding to PINK1 phosphorylated ubiquitin. Phosphorylation at Thr-175 by PINK1 and at Thr-217 is important for mitochondrial localization. In terms of tissue distribution, highly expressed in the brain including the substantia nigra. Expressed in heart, testis and skeletal muscle. Expression is down-regulated or absent in tumor biopsies, and absent in the brain of PARK2 patients. Overexpression protects dopamine neurons from kainate-mediated apoptosis. Found in serum (at protein level).

The protein resides in the cytoplasm. It is found in the cytosol. The protein localises to the nucleus. It localises to the endoplasmic reticulum. Its subcellular location is the mitochondrion. The protein resides in the mitochondrion outer membrane. It is found in the cell projection. The protein localises to the neuron projection. It localises to the postsynaptic density. Its subcellular location is the presynapse. It carries out the reaction [E2 ubiquitin-conjugating enzyme]-S-ubiquitinyl-L-cysteine + [acceptor protein]-L-lysine = [E2 ubiquitin-conjugating enzyme]-L-cysteine + [acceptor protein]-N(6)-ubiquitinyl-L-lysine.. The protein operates within protein modification; protein ubiquitination. In the autoinhibited state the side chain of Phe-463 inserts into a hydrophobic groove in RING-0, occluding the ubiquitin acceptor site Cys-431, whereas the REP repressor element binds RING-1 and blocks its E2-binding site. Activation of PRKN requires 2 steps: (1) phosphorylation at Ser-65 by PINK1 and (2) binding to phosphorylated ubiquitin, leading to unlock repression of the catalytic Cys-431 by the RING-0 region via an allosteric mechanism and converting PRKN to its fully-active form. According to another report, phosphorylation at Ser-65 by PINK1 is not essential for activation and only binding to phosphorylated ubiquitin is essential to unlock repression. In addition, ISG15 conjugation positively regulates its ubiquitin E3 ligase activity by suppressing the intramolecular interaction that maintains its autoinhibited conformation. In terms of biological role, functions within a multiprotein E3 ubiquitin ligase complex, catalyzing the covalent attachment of ubiquitin moieties onto substrate proteins. Substrates include SYT11 and VDAC1. Other substrates are BCL2, CCNE1, GPR37, RHOT1/MIRO1, MFN1, MFN2, STUB1, SNCAIP, SEPTIN5, TOMM20, USP30, ZNF746, MIRO1 and AIMP2. Mediates monoubiquitination as well as 'Lys-6', 'Lys-11', 'Lys-48'-linked and 'Lys-63'-linked polyubiquitination of substrates depending on the context. Participates in the removal and/or detoxification of abnormally folded or damaged protein by mediating 'Lys-63'-linked polyubiquitination of misfolded proteins such as PARK7: 'Lys-63'-linked polyubiquitinated misfolded proteins are then recognized by HDAC6, leading to their recruitment to aggresomes, followed by degradation. Mediates 'Lys-63'-linked polyubiquitination of a 22 kDa O-linked glycosylated isoform of SNCAIP, possibly playing a role in Lewy-body formation. Mediates monoubiquitination of BCL2, thereby acting as a positive regulator of autophagy. Protects against mitochondrial dysfunction during cellular stress, by acting downstream of PINK1 to coordinate mitochondrial quality control mechanisms that remove and replace dysfunctional mitochondrial components. Depending on the severity of mitochondrial damage and/or dysfunction, activity ranges from preventing apoptosis and stimulating mitochondrial biogenesis to regulating mitochondrial dynamics and eliminating severely damaged mitochondria via mitophagy. Activation and recruitment onto the outer membrane of damaged/dysfunctional mitochondria (OMM) requires PINK1-mediated phosphorylation of both PRKN and ubiquitin. After mitochondrial damage, functions with PINK1 to mediate the decision between mitophagy or preventing apoptosis by inducing either the poly- or monoubiquitination of VDAC1, respectively; polyubiquitination of VDAC1 promotes mitophagy, while monoubiquitination of VDAC1 decreases mitochondrial calcium influx which ultimately inhibits apoptosis. When cellular stress results in irreversible mitochondrial damage, promotes the autophagic degradation of dysfunctional depolarized mitochondria (mitophagy) by promoting the ubiquitination of mitochondrial proteins such as TOMM20, RHOT1/MIRO1, MFN1 and USP30. Preferentially assembles 'Lys-6'-, 'Lys-11'- and 'Lys-63'-linked polyubiquitin chains, leading to mitophagy. The PINK1-PRKN pathway also promotes fission of damaged mitochondria by PINK1-mediated phosphorylation which promotes the PRKN-dependent degradation of mitochondrial proteins involved in fission such as MFN2. This prevents the refusion of unhealthy mitochondria with the mitochondrial network or initiates mitochondrial fragmentation facilitating their later engulfment by autophagosomes. Regulates motility of damaged mitochondria via the ubiquitination and subsequent degradation of MIRO1 and MIRO2; in motor neurons, this likely inhibits mitochondrial intracellular anterograde transport along the axons which probably increases the chance of the mitochondria undergoing mitophagy in the soma. Involved in mitochondrial biogenesis via the 'Lys-48'-linked polyubiquitination of transcriptional repressor ZNF746/PARIS which leads to its subsequent proteasomal degradation and allows activation of the transcription factor PPARGC1A. Limits the production of reactive oxygen species (ROS). Regulates cyclin-E during neuronal apoptosis. In collaboration with CHPF isoform 2, may enhance cell viability and protect cells from oxidative stress. Independently of its ubiquitin ligase activity, protects from apoptosis by the transcriptional repression of p53/TP53. May protect neurons against alpha synuclein toxicity, proteasomal dysfunction, GPR37 accumulation, and kainate-induced excitotoxicity. May play a role in controlling neurotransmitter trafficking at the presynaptic terminal and in calcium-dependent exocytosis. May represent a tumor suppressor gene. This is E3 ubiquitin-protein ligase parkin from Homo sapiens (Human).